Here is a 627-residue protein sequence, read N- to C-terminus: CTP synthase (627 aa).

A Glutamine amidotransferase type-1 domain is found at 300–554; sequence CIAVVGKYTK…LASVDRLNQY (255 aa). Active-site for GATase activity residues include Cys399, His526, and Glu528. Residues Ser567, Ser570, Ser571, and Ser588 each carry the phosphoserine modification. Thr595 carries the phosphothreonine modification. The segment covering 599 to 613 has biased composition (polar residues); that stretch reads GISKSCNGSISTSDS. Positions 599 to 627 are disordered; it reads GISKSCNGSISTSDSEGACGGVDPTNGHK.

Belongs to the CTP synthase family. In ovary, expressed in oocytes, follicle cells and nurse cells. Also expressed in larval and adult testis (at protein level). In larvae, expressed in lymph gland, salivary gland, regions of the midgut, testis, optical lobe and trachea. Isoform 1 is expressed in adult testis, ovary, accessory gland and head. Isoform 2 is weakly expressed in ovary.

The protein localises to the cytoplasm. The catalysed reaction is UTP + L-glutamine + ATP + H2O = CTP + L-glutamate + ADP + phosphate + 2 H(+). The protein operates within pyrimidine metabolism; CTP biosynthesis via de novo pathway; CTP from UDP: step 2/2. Functionally, catalyzes the ATP-dependent amination of UTP to CTP with either L-glutamine or ammonia as the source of nitrogen. Constitutes the rate-limiting enzyme in the synthesis of cytosine nucleotides. In terms of biological role, required for assembly of cytoophidium in female germline cells. In nurse cells, CTPsyn filament assembly in the cytoophidium is regulated by Ack kinase which may thereby contribute to the control of CTP production at specific stages of oogenesis and development of the nurse cell membrane. This is CTP synthase from Drosophila melanogaster (Fruit fly).